We begin with the raw amino-acid sequence, 418 residues long: Histidinol dehydrogenase (418 aa).

NAD(+) contacts are provided by tyrosine 119, glutamine 180, and asparagine 203. The substrate site is built by threonine 226, glutamine 248, and histidine 251. Residues glutamine 248 and histidine 251 each coordinate Zn(2+). Active-site proton acceptor residues include glutamate 316 and histidine 317. The substrate site is built by histidine 317, aspartate 350, glutamate 404, and histidine 409. Aspartate 350 serves as a coordination point for Zn(2+). Histidine 409 is a binding site for Zn(2+).

This sequence belongs to the histidinol dehydrogenase family. Zn(2+) is required as a cofactor.

The enzyme catalyses L-histidinol + 2 NAD(+) + H2O = L-histidine + 2 NADH + 3 H(+). It functions in the pathway amino-acid biosynthesis; L-histidine biosynthesis; L-histidine from 5-phospho-alpha-D-ribose 1-diphosphate: step 9/9. In terms of biological role, catalyzes the sequential NAD-dependent oxidations of L-histidinol to L-histidinaldehyde and then to L-histidine. The sequence is that of Histidinol dehydrogenase from Staphylococcus aureus (strain COL).